A 323-amino-acid polypeptide reads, in one-letter code: Ferrochelatase (323 aa).

Fe cation is bound by residues His-195 and Glu-276.

The protein belongs to the ferrochelatase family.

It is found in the cytoplasm. It carries out the reaction heme b + 2 H(+) = protoporphyrin IX + Fe(2+). Its pathway is porphyrin-containing compound metabolism; protoheme biosynthesis; protoheme from protoporphyrin-IX: step 1/1. In terms of biological role, catalyzes the ferrous insertion into protoporphyrin IX. The protein is Ferrochelatase of Mannheimia succiniciproducens (strain KCTC 0769BP / MBEL55E).